The primary structure comprises 141 residues: Nucleoside diphosphate kinase (141 aa).

K11, F59, R87, T93, R104, and N114 together coordinate ATP. Residue H117 is the Pros-phosphohistidine intermediate of the active site.

The protein belongs to the NDK family. Homotetramer. Mg(2+) serves as cofactor.

Its subcellular location is the cytoplasm. The catalysed reaction is a 2'-deoxyribonucleoside 5'-diphosphate + ATP = a 2'-deoxyribonucleoside 5'-triphosphate + ADP. It carries out the reaction a ribonucleoside 5'-diphosphate + ATP = a ribonucleoside 5'-triphosphate + ADP. In terms of biological role, major role in the synthesis of nucleoside triphosphates other than ATP. The ATP gamma phosphate is transferred to the NDP beta phosphate via a ping-pong mechanism, using a phosphorylated active-site intermediate. In Bordetella petrii (strain ATCC BAA-461 / DSM 12804 / CCUG 43448), this protein is Nucleoside diphosphate kinase.